We begin with the raw amino-acid sequence, 215 residues long: Nascent polypeptide-associated complex subunit alpha (215 aa).

The segment at 1-81 (MPGEATDTVP…SEKKARKAMS (81 aa)) is disordered. The span at 9-28 (VPATEQELPQPQAETGSGTE) shows a compositional bias: polar residues. Residues 29–42 (SDSDESVPELEEQD) are compositionally biased toward acidic residues. A Phosphoserine; by ILK1 modification is found at Ser-43. Residues 44 to 57 (TQATTQQAQLAAAA) are compositionally biased toward low complexity. The tract at residues 69-80 (QSRSEKKARKAM) is required for DNA-binding. Residues 70–135 (SRSEKKARKA…AKIEDLSQQA (66 aa)) form the NAC-A/B domain. Residues 93–108 (RVTIRKSKNILFVITK) are RNA/DNA-binding. Ser-132 carries the post-translational modification Phosphoserine. Residue Lys-142 is modified to N6-acetyllysine; alternate. Residue Lys-142 forms a Glycyl lysine isopeptide (Lys-Gly) (interchain with G-Cter in SUMO2); alternate linkage. Thr-159 carries the phosphothreonine; by GSK3-beta modification. Position 161 is a phosphothreonine (Thr-161). Phosphoserine is present on residues Ser-166, Ser-186, Ser-191, and Ser-203. The 38-residue stretch at 176–213 (VEVKDIELVMSQANVSRAKAVRALKNNSNDIVNAIMEL) folds into the UBA domain.

Belongs to the NAC-alpha family. As to quaternary structure, part of the nascent polypeptide-associated complex (NAC), which is a heterodimer of NACA and BTF3 (via NAC-A/B domains). NAC associates with ribosomes through the BTF3/NACB subunit and contacts the ribosomal protein L23, which is positioned near the exiting site. Both subunits can contact nascent polypeptide chains. NACA may also form homodimers, and only this form binds DNA. Interacts with TBP and JUN. Phosphorylation of Ser-43 by ILK during cell adhesion may promote nuclear localization. Phosphorylation of Thr-159 by GSK3B may promote proteasome mediated degradation.

It localises to the cytoplasm. Its subcellular location is the nucleus. Functionally, prevents inappropriate targeting of non-secretory polypeptides to the endoplasmic reticulum (ER). Binds to nascent polypeptide chains as they emerge from the ribosome and blocks their interaction with the signal recognition particle (SRP), which normally targets nascent secretory peptides to the ER. Also reduces the inherent affinity of ribosomes for protein translocation sites in the ER membrane (M sites). May act as a specific coactivator for JUN, binding to DNA and stabilizing the interaction of JUN homodimers with target gene promoters. This is Nascent polypeptide-associated complex subunit alpha (NACA) from Bos taurus (Bovine).